The following is a 316-amino-acid chain: 4-hydroxy-3-methylbut-2-enyl diphosphate reductase (316 aa).

Residue Cys-12 coordinates [4Fe-4S] cluster. (2E)-4-hydroxy-3-methylbut-2-enyl diphosphate contacts are provided by His-43 and His-81. Dimethylallyl diphosphate is bound by residues His-43 and His-81. Residues His-43 and His-81 each coordinate isopentenyl diphosphate. Cys-103 serves as a coordination point for [4Fe-4S] cluster. His-131 lines the (2E)-4-hydroxy-3-methylbut-2-enyl diphosphate pocket. His-131 is a binding site for dimethylallyl diphosphate. Residue His-131 coordinates isopentenyl diphosphate. The active-site Proton donor is the Glu-133. Residue Thr-170 coordinates (2E)-4-hydroxy-3-methylbut-2-enyl diphosphate. Cys-198 serves as a coordination point for [4Fe-4S] cluster. Residues Ser-226, Asn-228, and Ser-271 each contribute to the (2E)-4-hydroxy-3-methylbut-2-enyl diphosphate site. Dimethylallyl diphosphate-binding residues include Ser-226, Asn-228, and Ser-271. Isopentenyl diphosphate-binding residues include Ser-226, Asn-228, and Ser-271.

The protein belongs to the IspH family. [4Fe-4S] cluster serves as cofactor.

The catalysed reaction is isopentenyl diphosphate + 2 oxidized [2Fe-2S]-[ferredoxin] + H2O = (2E)-4-hydroxy-3-methylbut-2-enyl diphosphate + 2 reduced [2Fe-2S]-[ferredoxin] + 2 H(+). It catalyses the reaction dimethylallyl diphosphate + 2 oxidized [2Fe-2S]-[ferredoxin] + H2O = (2E)-4-hydroxy-3-methylbut-2-enyl diphosphate + 2 reduced [2Fe-2S]-[ferredoxin] + 2 H(+). It participates in isoprenoid biosynthesis; dimethylallyl diphosphate biosynthesis; dimethylallyl diphosphate from (2E)-4-hydroxy-3-methylbutenyl diphosphate: step 1/1. It functions in the pathway isoprenoid biosynthesis; isopentenyl diphosphate biosynthesis via DXP pathway; isopentenyl diphosphate from 1-deoxy-D-xylulose 5-phosphate: step 6/6. Functionally, catalyzes the conversion of 1-hydroxy-2-methyl-2-(E)-butenyl 4-diphosphate (HMBPP) into a mixture of isopentenyl diphosphate (IPP) and dimethylallyl diphosphate (DMAPP). Acts in the terminal step of the DOXP/MEP pathway for isoprenoid precursor biosynthesis. The protein is 4-hydroxy-3-methylbut-2-enyl diphosphate reductase of Bacillus mycoides (strain KBAB4) (Bacillus weihenstephanensis).